The chain runs to 364 residues: DNA replication and repair protein RecF (364 aa).

An ATP-binding site is contributed by 30–37 (GLNAQGKS).

Belongs to the RecF family.

It is found in the cytoplasm. The RecF protein is involved in DNA metabolism; it is required for DNA replication and normal SOS inducibility. RecF binds preferentially to single-stranded, linear DNA. It also seems to bind ATP. The sequence is that of DNA replication and repair protein RecF from Caldanaerobacter subterraneus subsp. tengcongensis (strain DSM 15242 / JCM 11007 / NBRC 100824 / MB4) (Thermoanaerobacter tengcongensis).